Reading from the N-terminus, the 640-residue chain is Rab proteins geranylgeranyltransferase component A (640 aa).

2 disordered regions span residues 414–439 and 594–640; these read DILG…NNNN and HNEN…EMEL. Low complexity predominate over residues 419–439; that stretch reads NNNNNNNNNNNNNNNNNNNNN. Positions 604–624 are enriched in acidic residues; that stretch reads IDSDEDEDEDINDMNDNEEED.

Belongs to the Rab GDI family.

In terms of biological role, substrate-binding subunit (component A) of the Rab geranylgeranyltransferase (GGTase) complex. Binds unprenylated Rab proteins and presents the substrate peptide to the catalytic component B. The component A is thought to be regenerated by transferring its prenylated Rab back to the donor membrane. This is Rab proteins geranylgeranyltransferase component A (MRS6) from Candida albicans (Yeast).